The primary structure comprises 919 residues: MLX-interacting protein (919 aa).

Positions 1–72 (MAADVFMCSP…AGPGREEPPR (72 aa)) are disordered. Alanine 2 bears the N-acetylalanine mark. Phosphoserine is present on residues serine 9, serine 27, serine 33, and serine 39. Acidic residues predominate over residues 27–37 (SEDDDDSDTDE). Positions 44–56 (SGAATPARAHASA) are enriched in low complexity. Residues 73–327 (RQQIIHSGHF…PLQPNLDFMD (255 aa)) form a required for cytoplasmic localization region. The transactivation domain stretch occupies residues 322 to 445 (NLDFMDTFEP…LLSPSPAPPP (124 aa)). Disordered regions lie at residues 542–562 (KPVS…PAPK) and 633–712 (DLGH…SDPK). Serine 669 is modified (phosphoserine). Positions 670–685 (PQVTVTGPSRDCPNSG) are enriched in polar residues. The segment covering 686–706 (QASPCASEQSPSPQSPQNNCS) has biased composition (low complexity). Residues 719–769 (NRQMKHISAEQKRRFNIKMCFDMLNSLISNNSKLTSHAITLQKTVEYITKL) enclose the bHLH domain. The segment at 769 to 790 (LQQERGQMQEEARRLREEIEEL) is leucine-zipper. The mediates heterotypic interactions between MLXIP and MLX and is required for cytoplasmic localization stretch occupies residues 832-881 (WKFWIFSIIIKPLFESFKGMVSTSSLEELHRTALSWLDQHCSLPILRPMV).

In terms of assembly, efficient DNA binding requires dimerization with another bHLH protein. Binds DNA as a homodimer or a heterodimer with MLX. As to expression, widely expressed in adult tissues. Most abundant in skeletal muscle.

It localises to the cytoplasm. Its subcellular location is the nucleus. It is found in the mitochondrion outer membrane. Its function is as follows. Binds DNA as a heterodimer with MLX and activates transcription. Binds to the canonical E box sequence 5'-CACGTG-3'. Plays a role in transcriptional activation of glycolytic target genes. Involved in glucose-responsive gene regulation. The chain is MLX-interacting protein from Homo sapiens (Human).